The sequence spans 431 residues: uncharacterized protein (431 aa).

2 disordered regions span residues 17-66 (VDPE…GQQA) and 81-415 (GSVT…ALPR). Over residues 91–106 (DKADREPAARPRDPRS) the composition is skewed to basic and acidic residues. Positions 173 to 195 (TYRRRRPTAATPSRKKKARRGPK) are enriched in basic residues. A compositionally biased stretch (low complexity) spans 235–244 (RTPGPVHSAA). Residues 299 to 312 (RMGGSSGGRGGTPG) show a composition bias toward gly residues. Residues 317–342 (RAAPGARPTAPDGAPGRWDGPADGPA) are compositionally biased toward low complexity. Over residues 343–360 (PGLGRGGWGVGREAGGSG) the composition is skewed to gly residues.

This is an uncharacterized protein from Homo sapiens (Human).